Here is a 245-residue protein sequence, read N- to C-terminus: MDRSPLFLIIMGAPGSGKGTQSKLLASQLSLLHISSGDLLRDAVSKDTPLSQEIKSYLDQGKLLPDTLVWKLVHEKLDEFQQDTLLRRLSFLSRSENSAILDGFPRTVTQAKLLHEFLSSYFPNYKVILLDISDEEVLNRLTSRYICPACQGIYNEQQGFSSCPKCSVELIRRSDDTLEVILDRIQTYKQETQPVLDYYTEKQKLITIDANAPTQQVFQSILDSLSASLVYQERDCCNCDCDDED.

ATP is bound at residue 15–20 (GSGKGT). Residues 35-64 (SSGDLLRDAVSKDTPLSQEIKSYLDQGKLL) form an NMP region. AMP is bound by residues Ser-36, Arg-41, 62–64 (KLL), 103–106 (GFPR), and Gln-110. Positions 143-176 (SRYICPACQGIYNEQQGFSSCPKCSVELIRRSDD) are LID. An ATP-binding site is contributed by Arg-144. Zn(2+)-binding residues include Cys-147 and Cys-150. ATP is bound at residue 153 to 154 (IY). Zn(2+) is bound by residues Cys-163 and Cys-166. Residues Arg-173 and Arg-184 each coordinate AMP. Ala-212 provides a ligand contact to ATP.

Belongs to the adenylate kinase family. Monomer.

It localises to the cytoplasm. It carries out the reaction AMP + ATP = 2 ADP. It functions in the pathway purine metabolism; AMP biosynthesis via salvage pathway; AMP from ADP: step 1/1. In terms of biological role, catalyzes the reversible transfer of the terminal phosphate group between ATP and AMP. Plays an important role in cellular energy homeostasis and in adenine nucleotide metabolism. This Chlamydia trachomatis serovar A (strain ATCC VR-571B / DSM 19440 / HAR-13) protein is Adenylate kinase.